The chain runs to 304 residues: UDP-N-acetylenolpyruvoylglucosamine reductase (304 aa).

The 166-residue stretch at 33–198 folds into the FAD-binding PCMH-type domain; it reads RVGGPADILV…IEATVELESG (166 aa). R177 is an active-site residue. S227 acts as the Proton donor in catalysis. E297 is a catalytic residue.

The protein belongs to the MurB family. It depends on FAD as a cofactor.

It localises to the cytoplasm. It carries out the reaction UDP-N-acetyl-alpha-D-muramate + NADP(+) = UDP-N-acetyl-3-O-(1-carboxyvinyl)-alpha-D-glucosamine + NADPH + H(+). It participates in cell wall biogenesis; peptidoglycan biosynthesis. Cell wall formation. The chain is UDP-N-acetylenolpyruvoylglucosamine reductase from Clostridium perfringens (strain ATCC 13124 / DSM 756 / JCM 1290 / NCIMB 6125 / NCTC 8237 / Type A).